The chain runs to 1612 residues: DNA topoisomerase 2-beta (1612 aa).

The residue at position 2 (alanine 2) is an N-acetylalanine. N6-acetyllysine is present on lysine 3. Glycyl lysine isopeptide (Lys-Gly) (interchain with G-Cter in SUMO2) cross-links involve residues lysine 21 and lysine 22. ATP-binding positions include asparagine 100, asparagine 129, and 157 to 159 (SSN). Residues lysine 165 and lysine 166 each participate in a glycyl lysine isopeptide (Lys-Gly) (interchain with G-Cter in SUMO2) cross-link. An ATP-binding site is contributed by 170–177 (GRNGYGAK). Residues lysine 216 and lysine 287 each participate in a glycyl lysine isopeptide (Lys-Gly) (interchain with G-Cter in SUMO2) cross-link. The tract at residues 351–353 (KKK) is interaction with DNA. Glycyl lysine isopeptide (Lys-Gly) (interchain with G-Cter in SUMO2) cross-links involve residues lysine 355 and lysine 361. Residue 385-387 (QTK) participates in ATP binding. Residues lysine 425, lysine 427, and lysine 434 each participate in a glycyl lysine isopeptide (Lys-Gly) (interchain with G-Cter in SUMO2) cross-link. The region spanning 464-581 (CTLILTEGDS…SLLKHGFLEE (118 aa)) is the Toprim domain. 3 residues coordinate Mg(2+): glutamate 470, aspartate 550, and aspartate 552. Residues lysine 588, lysine 593, lysine 623, lysine 631, lysine 634, lysine 664, and lysine 700 each participate in a glycyl lysine isopeptide (Lys-Gly) (interchain with G-Cter in SUMO2) cross-link. In terms of domain architecture, Topo IIA-type catalytic spans 724 to 1177 (IPSLVDGFKP…SPSDLWKEDL (454 aa)). The O-(5'-phospho-DNA)-tyrosine intermediate role is filled by tyrosine 814. Residues 999-1008 (KLQTTLTCNS) are interaction with DNA. A Glycyl lysine isopeptide (Lys-Gly) (interchain with G-Cter in SUMO2) cross-link involves residue lysine 1080. Residues 1098–1128 (AWKEAQEKAAEEEDSQNQHDDSSSDSGTPSG) form a disordered region. Residues lysine 1202, lysine 1205, lysine 1214, and lysine 1215 each participate in a glycyl lysine isopeptide (Lys-Gly) (interchain with G-Cter in SUMO2) cross-link. A Phosphoserine modification is found at serine 1224. Glycyl lysine isopeptide (Lys-Gly) (interchain with G-Cter in SUMO2) cross-links involve residues lysine 1238, lysine 1250, and lysine 1259. Residues 1245 to 1586 (LLKKKKGDPD…FTSEPPALPR (342 aa)) are disordered. At threonine 1280 the chain carries Phosphothreonine. Glycyl lysine isopeptide (Lys-Gly) (interchain with G-Cter in SUMO2) cross-links involve residues lysine 1311 and lysine 1315. Basic and acidic residues-rich tracts occupy residues 1322-1332 (PWSDDESKSES) and 1346-1358 (SLLR…RPKY). Serine 1324, serine 1328, serine 1330, serine 1332, and serine 1346 each carry phosphoserine. Phosphotyrosine is present on tyrosine 1358. The segment covering 1362 to 1379 (FSEEEDDDAAAADDSNDL) has biased composition (acidic residues). A phosphoserine mark is found at serine 1363 and serine 1376. Lysine 1385 participates in a covalent cross-link: Glycyl lysine isopeptide (Lys-Gly) (interchain with G-Cter in SUMO2). The residue at position 1387 (serine 1387) is a Phosphoserine. Threonine 1390 is modified (phosphothreonine). Phosphoserine is present on serine 1400. A Phosphotyrosine modification is found at tyrosine 1408. Serine 1411 bears the Phosphoserine mark. Basic and acidic residues predominate over residues 1417–1429 (ATPEKSSNDKKSQ). Residue lysine 1427 forms a Glycyl lysine isopeptide (Lys-Gly) (interchain with G-Cter in SUMO2) linkage. Phosphoserine is present on residues serine 1428, serine 1439, and serine 1441. Residue lysine 1443 forms a Glycyl lysine isopeptide (Lys-Gly) (interchain with G-Cter in SUMO2) linkage. Basic and acidic residues predominate over residues 1443 to 1453 (KSEDDSAKFDS). 3 positions are modified to phosphoserine: serine 1448, serine 1453, and serine 1460. Lysine 1477 is covalently cross-linked (Glycyl lysine isopeptide (Lys-Gly) (interchain with G-Cter in SUMO2)). The interaction with PLSCR1 stretch occupies residues 1493–1499 (KAKRAPK). A phosphoserine mark is found at serine 1509, serine 1511, and serine 1513. Basic residues predominate over residues 1526 to 1536 (GKGRGAKKRKA). Serine 1537 and serine 1539 each carry phosphoserine. Basic residues predominate over residues 1550–1561 (KPSKTASKKPKK). Threonine 1562 bears the Phosphothreonine mark. Phosphoserine occurs at positions 1563 and 1568. Tyrosine 1596 bears the Phosphotyrosine mark. Residue serine 1600 is modified to Phosphoserine.

This sequence belongs to the type II topoisomerase family. In terms of assembly, homodimer. Interacts with KIAA1210. Interacts with PLSCR1. Mg(2+) is required as a cofactor. The cofactor is Mn(2+). Requires Ca(2+) as cofactor.

Its subcellular location is the nucleus. It localises to the nucleolus. It is found in the nucleoplasm. The enzyme catalyses ATP-dependent breakage, passage and rejoining of double-stranded DNA.. Functionally, key decatenating enzyme that alters DNA topology by binding to two double-stranded DNA molecules, generating a double-stranded break in one of the strands, passing the intact strand through the broken strand, and religating the broken strand. Plays a role in B-cell differentiation. In Mus musculus (Mouse), this protein is DNA topoisomerase 2-beta (Top2b).